Consider the following 91-residue polypeptide: MEQQQDRRELDAKAREGETVVPGGTGGKSLDAQERLAEGRSRGGQTRKEQIGSEGYQEMGRKGGLSSAGGPGGERASEEGRPIDESKYRHP.

Basic and acidic residues-rich tracts occupy residues methionine 1 to glutamate 18 and aspartate 31 to isoleucine 51. Residues methionine 1 to proline 91 are disordered. Residues lysine 62 to glycine 73 are compositionally biased toward gly residues. The span at arginine 75–proline 91 shows a compositional bias: basic and acidic residues.

Belongs to the small hydrophilic plant seed protein family.

The polypeptide is Em-like protein (Picea glauca (White spruce)).